The chain runs to 269 residues: RBPJ-interacting and tubulin-associated protein 1 (269 aa).

A Nuclear export signal motif is present at residues 5 to 17 (VELAISGMQTLHV). Disordered stretches follow at residues 67 to 94 (GTGVSQALGANGSCESTSSSGSTPTLTP) and 145 to 269 (PATP…PPWK). Residues 79 to 93 (SCESTSSSGSTPTLT) are compositionally biased toward low complexity. Positions 92–108 (LTPRKKNKYRLISHTPS) match the Nuclear localization signal motif. Residues 128–156 (WMARGDAAKLHALFWTPPATPRGSHSPRP) form an interaction with RBPJ/RBPSUH region. The interval 156–269 (PRETPVRCVH…ATQKTKPPWK (114 aa)) is interaction with tubulin. Polar residues-rich tracts occupy residues 202 to 220 (LTHPNVPSTGHTPASSPCT) and 247 to 269 (VSVSVPTTPRQGGATQKTKPPWK).

The protein belongs to the RITA family. In terms of assembly, interacts with RBPJ/RBPSUH.

The protein resides in the cytoplasm. The protein localises to the nucleus. Its subcellular location is the cytoskeleton. It is found in the microtubule organizing center. It localises to the centrosome. Functionally, tubulin-binding protein that acts as a negative regulator of Notch signaling pathway. Shuttles between the cytoplasm and the nucleus and mediates the nuclear export of RBPJ/RBPSUH, thereby preventing the interaction between RBPJ/RBPSUH and NICD product of Notch proteins (Notch intracellular domain), leading to down-regulate Notch-mediated transcription. May play a role in neurogenesis. The polypeptide is RBPJ-interacting and tubulin-associated protein 1 (RITA1) (Bos taurus (Bovine)).